The sequence spans 187 residues: Interferon alpha-1/2 (187 aa).

Residues 1–23 form the signal peptide; sequence MALPCSFSVALVLLSCHSLCCLA. Disulfide bonds link C24-C122 and C52-C160. A glycan (N-linked (GlcNAc...) asparagine) is linked at N101.

The protein belongs to the alpha/beta interferon family.

It localises to the secreted. Produced by macrophages, IFN-alpha have antiviral activities. Interferon stimulates the production of two enzymes: a protein kinase and an oligoadenylate synthetase. This chain is Interferon alpha-1/2, found in Canis lupus familiaris (Dog).